The following is an 810-amino-acid chain: Probable dehydratase YbiW (810 aa).

The PFL domain maps to 11 to 682; the sequence is DRIKAHKNAL…QTMATPDGRK (672 aa). Positions 677 to 699 are disordered; sequence TPDGRKAHTPLAEGASPASGTDH. Positions 689 to 810 constitute a Glycine radical domain; sequence EGASPASGTD…DIIARTEHML (122 aa). Position 786 is a glycine radical (glycine 786).

It belongs to the glycyl radical enzyme (GRE) family.

In terms of biological role, probably shows dehydratase activity. The protein is Probable dehydratase YbiW (ybiW) of Escherichia coli (strain K12).